Here is a 139-residue protein sequence, read N- to C-terminus: D-ribose pyranase (139 aa).

Histidine 20 serves as the catalytic Proton donor. Substrate is bound by residues aspartate 28, histidine 106, and 128-130 (YAN).

Belongs to the RbsD / FucU family. RbsD subfamily. As to quaternary structure, homodecamer.

It is found in the cytoplasm. It carries out the reaction beta-D-ribopyranose = beta-D-ribofuranose. It participates in carbohydrate metabolism; D-ribose degradation; D-ribose 5-phosphate from beta-D-ribopyranose: step 1/2. In terms of biological role, catalyzes the interconversion of beta-pyran and beta-furan forms of D-ribose. The sequence is that of D-ribose pyranase from Escherichia coli O45:K1 (strain S88 / ExPEC).